The sequence spans 707 residues: Tryptophan synthase (707 aa).

The tract at residues 1-297 is tryptophan synthase alpha chain; sequence MSEQLRQTFA…VKKEILDEFD (297 aa). Catalysis depends on proton acceptor residues Glu50 and Asp61. Positions 298-707 are tryptophan synthase beta chain; sequence ENHKHPIRFG…DLRFEEDPSA (410 aa). Lys384 carries the N6-(pyridoxal phosphate)lysine modification. A phosphoserine mark is found at Ser540 and Ser683.

The protein in the N-terminal section; belongs to the TrpA family. This sequence in the C-terminal section; belongs to the TrpB family. It depends on pyridoxal 5'-phosphate as a cofactor.

It carries out the reaction (1S,2R)-1-C-(indol-3-yl)glycerol 3-phosphate + L-serine = D-glyceraldehyde 3-phosphate + L-tryptophan + H2O. Its pathway is amino-acid biosynthesis; L-tryptophan biosynthesis; L-tryptophan from chorismate: step 5/5. The sequence is that of Tryptophan synthase (TRP5) from Saccharomyces cerevisiae (strain ATCC 204508 / S288c) (Baker's yeast).